The primary structure comprises 104 residues: UPF0145 protein TM1040_1243 (104 aa).

Belongs to the UPF0145 family.

The protein is UPF0145 protein TM1040_1243 of Ruegeria sp. (strain TM1040) (Silicibacter sp.).